The following is a 216-amino-acid chain: Holliday junction branch migration complex subunit RuvA (216 aa).

Positions 1–64 (MISFIKGVLI…EDAQQLYGFK (64 aa)) are domain I. Residues 65–143 (SKVDKKVFQE…KMANEIYAQT (79 aa)) are domain II. Residues 144 to 163 (SGTTTTSQDSQAQQAPTSVV) form a flexible linker region. The segment at 164–216 (LANSIFNESVDALLALGYKQKDAEKMARSAMGDATTAAEVIRKALQGSIKSKG) is domain III.

This sequence belongs to the RuvA family. As to quaternary structure, homotetramer. Forms an RuvA(8)-RuvB(12)-Holliday junction (HJ) complex. HJ DNA is sandwiched between 2 RuvA tetramers; dsDNA enters through RuvA and exits via RuvB. An RuvB hexamer assembles on each DNA strand where it exits the tetramer. Each RuvB hexamer is contacted by two RuvA subunits (via domain III) on 2 adjacent RuvB subunits; this complex drives branch migration. In the full resolvosome a probable DNA-RuvA(4)-RuvB(12)-RuvC(2) complex forms which resolves the HJ.

The protein resides in the cytoplasm. Its function is as follows. The RuvA-RuvB-RuvC complex processes Holliday junction (HJ) DNA during genetic recombination and DNA repair, while the RuvA-RuvB complex plays an important role in the rescue of blocked DNA replication forks via replication fork reversal (RFR). RuvA specifically binds to HJ cruciform DNA, conferring on it an open structure. The RuvB hexamer acts as an ATP-dependent pump, pulling dsDNA into and through the RuvAB complex. HJ branch migration allows RuvC to scan DNA until it finds its consensus sequence, where it cleaves and resolves the cruciform DNA. In Francisella tularensis subsp. holarctica (strain FTNF002-00 / FTA), this protein is Holliday junction branch migration complex subunit RuvA.